A 1070-amino-acid polypeptide reads, in one-letter code: Ubiquitin-protein ligase E3B (1070 aa).

Met1 bears the N-acetylmethionine mark. An IQ domain is found at 29–58 (RERSAVTIQALVRSFLCRRRLHRDIRKEID). At Ser421 the chain carries Phosphoserine. Residues 704–1070 (SQHAMKGVIR…ISMNTGFELS (367 aa)) enclose the HECT domain. Cys1038 functions as the Glycyl thioester intermediate in the catalytic mechanism.

In terms of tissue distribution, widely expressed. High expression is observed in developing central nervous system.

It localises to the postsynaptic density. The enzyme catalyses S-ubiquitinyl-[E2 ubiquitin-conjugating enzyme]-L-cysteine + [acceptor protein]-L-lysine = [E2 ubiquitin-conjugating enzyme]-L-cysteine + N(6)-ubiquitinyl-[acceptor protein]-L-lysine.. Its pathway is protein modification; protein ubiquitination. Its function is as follows. E3 ubiquitin-protein ligase which accepts ubiquitin from an E2 ubiquitin-conjugating enzyme in the form of a thioester and then directly transfers the ubiquitin to targeted substrates. Ubiquitinates BCKDK and targets it for degradation, thereby regulating various metabolic processes. Involved in the positive regulation of neurite branching in hippocampal neurons and the control of neuronal spine number and morphology, through the ubiquitination of PPP3CC. This chain is Ubiquitin-protein ligase E3B (Ube3b), found in Mus musculus (Mouse).